The primary structure comprises 199 residues: MTTLTAQQIACVYAWLAQLFSRELDDEQLTQIASAQMAEWFSLLKSEPPLAAAVNELENCIATLTVRDDARLELAADFCGLFLMTDKQAALPYASAYKQDEQEIKRLLVEAGMETSGNFNEPADHLAIYLELLSHLHFSLGEGTVPARRIDSLRQKTLTALWQWLPEFAARCHQYDSFGFYAALSQLLLVLVECDHQNK.

It belongs to the TorD/DmsD family. TorD subfamily.

It is found in the cytoplasm. Involved in the biogenesis of TorA. Acts on TorA before the insertion of the molybdenum cofactor and, as a result, probably favors a conformation of the apoenzyme that is competent for acquiring the cofactor. This is Chaperone protein TorD from Shigella boydii serotype 18 (strain CDC 3083-94 / BS512).